We begin with the raw amino-acid sequence, 569 residues long: CTP synthase (569 aa).

In terms of domain architecture, Glutamine amidotransferase type-1 spans R313–M569. The Nucleophile role is filled by C410. Residues H541 and E543 contribute to the active site.

The protein belongs to the CTP synthase family.

The catalysed reaction is UTP + L-glutamine + ATP + H2O = CTP + L-glutamate + ADP + phosphate + 2 H(+). It participates in pyrimidine metabolism; CTP biosynthesis via de novo pathway; CTP from UDP: step 2/2. Catalyzes the ATP-dependent amination of UTP to CTP with either L-glutamine or ammonia as the source of nitrogen. This chain is CTP synthase (ctps), found in Dictyostelium discoideum (Social amoeba).